The following is a 369-amino-acid chain: Protein-glutamate methylesterase/protein-glutamine glutaminase 1 (369 aa).

One can recognise a Response regulatory domain in the interval 11-128 (RVLIVDDSAA…DLERQEASIR (118 aa)). D62 carries the post-translational modification 4-aspartylphosphate. The segment at 136–168 (ATETTRRRSQPEPRPLAPGPKLTADEILPARPP) is disordered. The CheB-type methylesterase domain maps to 170–358 (PVPETMPVVC…LDRLAARIME (189 aa)). Residues S183, H209, and D305 contribute to the active site.

The protein belongs to the CheB family. Phosphorylated by CheA. Phosphorylation of the N-terminal regulatory domain activates the methylesterase activity.

It localises to the cytoplasm. The catalysed reaction is [protein]-L-glutamate 5-O-methyl ester + H2O = L-glutamyl-[protein] + methanol + H(+). It catalyses the reaction L-glutaminyl-[protein] + H2O = L-glutamyl-[protein] + NH4(+). Functionally, involved in chemotaxis. Part of a chemotaxis signal transduction system that modulates chemotaxis in response to various stimuli. Catalyzes the demethylation of specific methylglutamate residues introduced into the chemoreceptors (methyl-accepting chemotaxis proteins or MCP) by CheR. Also mediates the irreversible deamidation of specific glutamine residues to glutamic acid. The protein is Protein-glutamate methylesterase/protein-glutamine glutaminase 1 of Cereibacter sphaeroides (strain ATCC 17023 / DSM 158 / JCM 6121 / CCUG 31486 / LMG 2827 / NBRC 12203 / NCIMB 8253 / ATH 2.4.1.) (Rhodobacter sphaeroides).